Reading from the N-terminus, the 103-residue chain is Small ribosomal subunit protein bS18c (103 aa).

Belongs to the bacterial ribosomal protein bS18 family. As to quaternary structure, part of the 30S ribosomal subunit.

It localises to the plastid. It is found in the chloroplast. The protein is Small ribosomal subunit protein bS18c of Buxus microphylla (Littleleaf boxwood).